Here is a 716-residue protein sequence, read N- to C-terminus: MNYDYLTDEQKQQLYFHQMQAEQQQHQQQLHYKQQQHIQQQQQHQQNQQNQQQQPQPPRQPFSTFLQNNGSNSDLPQMGTFQQDLQRQNIPNLRFSQQNQPSDLGQEFQDDDSFMDEDLTEIHEQPPMQELNSSPMTHPHSFQQNFQTPTKNDDANLRNQQFQSVDSERSLDFKPPVTFTKLNNNSNADLSSPTESSFLKSNLNLPNSNIPPAGASNDPNAQKSNYIYFNRQPNSLNKIAQDKASSIKLKLENYYQMSVAHAIERNQRRLDLEHKLLNEESGSSEERKNRQLQNLGKKESQFLRLRRTKLSLEDFNTVKVIGKGAFGEVRLVQKRDTGKIYAMKTLLKSEMYKKDQLAHVKAERDVLAGSDSPWVVSLYYSFQDAQYLYLIMEFLPGGDLMTMLIRWQIFTEDITRFYMAECVLAIEAIHKLGFIHRDIKPDNILIDIRGHIKLSDFGLSTGFHKTHDSNYYKKLLEKENPHHTNPQNGNLQAPSMATNNRNSMMVDAIHLTMSNRQQMQTWRKSRRLMAYSTVGTPDYIAPEIFVHQGYGQECDWWSLGAIMFECLIGWPPFCSETPHETYRKILNWQETLQIPDDIHLSPESEDLIRKLLTNAENRLGRYNGADELKSHPFFRGVDWDTIRKVDAPFIPKLRSITDTRFFPTDELENVPDSPALSKAMEQRDQVLQNGGNVKEDLPFIGYTYSRFDYLTRKNAL.

Residues 22 to 54 are compositionally biased toward low complexity; it reads EQQQHQQQLHYKQQQHIQQQQQHQQNQQNQQQQ. Disordered stretches follow at residues 22-78, 128-154, and 176-223; these read EQQQ…LPQM, MQEL…KNDD, and PVTF…NAQK. Polar residues-rich tracts occupy residues 62–78, 130–150, and 180–195; these read FSTF…LPQM, ELNS…QTPT, and TKLN…SPTE. Positions 196–212 are enriched in low complexity; the sequence is SSFLKSNLNLPNSNIPP. The 320-residue stretch at 315-634 folds into the Protein kinase domain; the sequence is FNTVKVIGKG…ADELKSHPFF (320 aa). ATP contacts are provided by residues 321–329 and K344; that span reads IGKGAFGEV. Catalysis depends on D438, which acts as the Proton acceptor. The AGC-kinase C-terminal domain occupies 635-714; that stretch reads RGVDWDTIRK…SRFDYLTRKN (80 aa).

Belongs to the protein kinase superfamily. STE Ser/Thr protein kinase family. COT1 subfamily.

It carries out the reaction L-seryl-[protein] + ATP = O-phospho-L-seryl-[protein] + ADP + H(+). The enzyme catalyses L-threonyl-[protein] + ATP = O-phospho-L-threonyl-[protein] + ADP + H(+). Functionally, protein kinase that seems to play a role in the regulation of cell morphogenesis and proliferation. This is Serine/threonine-protein kinase CBK1 (CBK1) from Debaryomyces hansenii (strain ATCC 36239 / CBS 767 / BCRC 21394 / JCM 1990 / NBRC 0083 / IGC 2968) (Yeast).